A 124-amino-acid chain; its full sequence is Large ribosomal subunit protein bL12 (124 aa).

The protein belongs to the bacterial ribosomal protein bL12 family. As to quaternary structure, homodimer. Part of the ribosomal stalk of the 50S ribosomal subunit. Forms a multimeric L10(L12)X complex, where L10 forms an elongated spine to which 2 to 4 L12 dimers bind in a sequential fashion. Binds GTP-bound translation factors.

Functionally, forms part of the ribosomal stalk which helps the ribosome interact with GTP-bound translation factors. Is thus essential for accurate translation. The sequence is that of Large ribosomal subunit protein bL12 from Burkholderia mallei (strain NCTC 10247).